Consider the following 141-residue polypeptide: NADH dehydrogenase [ubiquinone] 1 alpha subcomplex subunit 11 (141 aa).

A2 is subject to N-acetylalanine. A run of 2 helical transmembrane segments spans residues 21–43 (KAYSTTSIASVAGLTAAAYRVTL) and 58–80 (QYTFTAAAVGAVFGLTTCISAHV).

This sequence belongs to the complex I NDUFA11 subunit family. As to quaternary structure, complex I is composed of 45 different subunits.

The protein localises to the mitochondrion inner membrane. Accessory subunit of the mitochondrial membrane respiratory chain NADH dehydrogenase (Complex I), that is believed not to be involved in catalysis. Complex I functions in the transfer of electrons from NADH to the respiratory chain. The immediate electron acceptor for the enzyme is believed to be ubiquinone. The chain is NADH dehydrogenase [ubiquinone] 1 alpha subcomplex subunit 11 (NDUFA11) from Homo sapiens (Human).